We begin with the raw amino-acid sequence, 80 residues long: Protein UL148A (80 aa).

A helical transmembrane segment spans residues 10 to 30 (WIPVCVVVVMTSVVLFAGLHV).

It localises to the host membrane. Plays a role in the down-regulation of the host NKG2D ligand MICA by utilizing the lysosomal pathway for its degradation. In turn, MICA reduction diminishes NK-cell killing of HCMV-infected cells. In Human cytomegalovirus (strain Merlin) (HHV-5), this protein is Protein UL148A (UL148A).